We begin with the raw amino-acid sequence, 208 residues long: Uracil phosphoribosyltransferase (208 aa).

Residues Arg78, Arg103, and 130 to 138 contribute to the 5-phospho-alpha-D-ribose 1-diphosphate site; that span reads DPMLATGGS. Uracil-binding positions include Ile193 and 198–200; that span reads GDA. Asp199 lines the 5-phospho-alpha-D-ribose 1-diphosphate pocket.

It belongs to the UPRTase family. The cofactor is Mg(2+).

The catalysed reaction is UMP + diphosphate = 5-phospho-alpha-D-ribose 1-diphosphate + uracil. It participates in pyrimidine metabolism; UMP biosynthesis via salvage pathway; UMP from uracil: step 1/1. With respect to regulation, allosterically activated by GTP. Its function is as follows. Catalyzes the conversion of uracil and 5-phospho-alpha-D-ribose 1-diphosphate (PRPP) to UMP and diphosphate. The protein is Uracil phosphoribosyltransferase of Sodalis glossinidius (strain morsitans).